The primary structure comprises 1025 residues: Multidrug resistance protein MdtC (1025 aa).

12 helical membrane-spanning segments follow: residues 3 to 23 (FFAL…AITL), 333 to 353 (EVEQ…FLFL), 360 to 380 (IIPA…MYLC), 387 to 407 (LSLM…IVVL), 431 to 451 (VGFT…PLLL), 463 to 483 (FAVT…TLTP), 528 to 548 (LVGV…ISIP), 853 to 873 (VILI…LYES), 875 to 895 (VHPL…LLAL), 897 to 917 (LFNA…IGIV), 953 to 973 (PIMM…LSGG), and 984 to 1004 (ITIV…TPVV).

Belongs to the resistance-nodulation-cell division (RND) (TC 2.A.6) family. MdtC subfamily. As to quaternary structure, part of a tripartite efflux system composed of MdtA, MdtB and MdtC. MdtC forms a heteromultimer with MdtB.

Its subcellular location is the cell inner membrane. Its function is as follows. The MdtABC tripartite complex confers resistance against novobiocin and deoxycholate. This is Multidrug resistance protein MdtC from Escherichia coli (strain SMS-3-5 / SECEC).